The chain runs to 747 residues: uncharacterized protein (747 aa).

Residues 7 to 27 form a helical membrane-spanning segment; the sequence is FFLKVISVIAPIVIIPTILAN.

It is found in the membrane. This is an uncharacterized protein from Ureaplasma parvum serovar 3 (strain ATCC 700970).